An 844-amino-acid chain; its full sequence is Neuronal PAS domain-containing protein 4B (844 aa).

The segment at 61–74 is basic motif; degenerate; sequence KMYRSTKGASKARR. The bHLH domain occupies 61-114; it reads KMYRSTKGASKARRDQINAEIRSLKELLPISDADKARLSYLHIMSLACIYTRKS. The helix-loop-helix motif stretch occupies residues 75 to 114; that stretch reads DQINAEIRSLKELLPISDADKARLSYLHIMSLACIYTRKS. 2 consecutive PAS domains span residues 132–190 and 294–343; these read SLPE…PVDH and DMRI…LHNG. Polar residues predominate over residues 410–422; the sequence is SRQSSDPLSSPDQ. Disordered regions lie at residues 410–432, 444–479, 702–725, and 757–784; these read SRQSSDPLSSPDQVFTPSSSGLS, GRSSSEELPGTSAPSSMTFDPLEGEEIDPQSHGGGH, PLPNLPSPSPVPPSPYSSVPSYSQ, and TEGGLQDGERPDEDMEMMSSQRSSEAPA. Over residues 704 to 716 the composition is skewed to pro residues; sequence PNLPSPSPVPPSP.

Efficient DNA binding requires dimerization with another bHLH protein.

It is found in the nucleus. Transcription factor expressed in neurons of the brain that regulates the excitatory-inhibitory balance within neural circuits and is required for contextual memory in the hippocampus. Plays a key role in the structural and functional plasticity of neurons. Acts as an early-response transcription factor in both excitatory and inhibitory neurons, where it induces distinct but overlapping sets of late-response genes in these two types of neurons, allowing the synapses that form on inhibitory and excitatory neurons to be modified by neuronal activity in a manner specific to their function within a circuit, thereby facilitating appropriate circuit responses to sensory experience. In Danio rerio (Zebrafish), this protein is Neuronal PAS domain-containing protein 4B (npas4b).